The sequence spans 127 residues: uncharacterized protein (127 aa).

2 consecutive transmembrane segments (helical) span residues 13-35 (ILLL…GIIF) and 57-81 (AVLI…IMIW).

The protein resides in the cell membrane. This is an uncharacterized protein from Mycoplasma genitalium (strain ATCC 33530 / DSM 19775 / NCTC 10195 / G37) (Mycoplasmoides genitalium).